A 584-amino-acid chain; its full sequence is Arginine--tRNA ligase (584 aa).

The 'HIGH' region signature appears at 129-139 (ANPTGPLHVGH).

This sequence belongs to the class-I aminoacyl-tRNA synthetase family. In terms of assembly, monomer.

It localises to the cytoplasm. It catalyses the reaction tRNA(Arg) + L-arginine + ATP = L-arginyl-tRNA(Arg) + AMP + diphosphate. The sequence is that of Arginine--tRNA ligase from Halorhodospira halophila (strain DSM 244 / SL1) (Ectothiorhodospira halophila (strain DSM 244 / SL1)).